Reading from the N-terminus, the 1072-residue chain is Serine/threonine-protein kinase 11-interacting protein (1072 aa).

8 LRR repeats span residues 109–130, 132–152, 164–185, 187–209, 210–231, 233–254, 255–276, and 280–301; these read SLRQLELRGVPIHSLCGLRGIY, QLESLVCNRSIQALEELLSAC, ALLSADFSYNALRSLDSSLRLL, ALRFLNLSHNHLQDCKGFLMDLC, ELYHLDISYNHLRLVPRVGPSG, ALGTLILRANELRSLQGLEQLK, NLRHLDVAYNLLEGHTELAPLW, and ELRKLYLEGNPLWFHPAHRAAT. The segment at 333 to 366 is disordered; sequence DSSGLGPVIQPLSWPVGSTTETSGGPELSDSLSS. Phosphoserine is present on residues S388, S390, and S393. Residues 441–454 show a composition bias toward polar residues; the sequence is MGSSPLSTTKTPAL. 2 disordered regions span residues 441 to 522 and 741 to 762; these read MGSS…EQKA and RPDGIPPQTSISHDRSSWSLSP. Composition is skewed to basic and acidic residues over residues 478 to 492 and 501 to 510; these read KESPEKVSEEGRVEP and EQDKEEGSRE. A phosphoserine mark is found at S757, S761, and S763. The interval 967–993 is disordered; that stretch reads HAESPLPVVSDETSEQPASLGPGPSLQ.

The protein belongs to the STK11IP family. As to quaternary structure, found in a ternary complex composed of STK11/LKB1, STK11IP and SMAD4. Interacts with SMAD4. Interacts with STK11/LKB1.

Its subcellular location is the cytoplasm. May regulate STK11/LKB1 function by controlling its subcellular localization. The sequence is that of Serine/threonine-protein kinase 11-interacting protein (Stk11ip) from Mus musculus (Mouse).